The following is a 396-amino-acid chain: B2 bradykinin receptor (396 aa).

Residues 1-65 (MDTRSSLCPK…EWWSWLNAIQ (65 aa)) lie on the Extracellular side of the membrane. N-linked (GlcNAc...) asparagine glycosylation is found at asparagine 33 and asparagine 44. A helical transmembrane segment spans residues 66 to 89 (APFLWVLFLLAALENIFVLSVFCL). Topologically, residues 90-98 (HKTNCTVAE) are cytoplasmic. The chain crosses the membrane as a helical span at residues 99-123 (IYLGNLAAADLILACGLPFWAITIA). Over 124–136 (NNFDWLFGEVLCR) the chain is Extracellular. A disulfide bridge connects residues cysteine 135 and cysteine 216. The chain crosses the membrane as a helical span at residues 137-158 (VVNTMIYMNLYSSICFLMLVSI). The Cytoplasmic segment spans residues 159–180 (DRYLALVKTMSMGRMRGVRWAK). At tyrosine 161 the chain carries Phosphotyrosine. Residues 181-203 (LYSLVIWSCTLLLSSPMLVFRTM) traverse the membrane as a helical segment. Residues 204–226 (KDYREEGHNVTACVIVYPSRSWE) are Extracellular-facing. N-linked (GlcNAc...) asparagine glycosylation occurs at asparagine 212. The chain crosses the membrane as a helical span at residues 227–253 (VFTNMLLNLVGFLLPLSIITFCTVRIM). Over 254 to 272 (QVLRNNEMKKFKEVQTEKK) the chain is Cytoplasmic. A helical membrane pass occupies residues 273 to 297 (ATVLVLAVLGLFVLCWFPFQISTFL). Residues 298–316 (DTLLRLGVLSGCWNERAVD) lie on the Extracellular side of the membrane. The chain crosses the membrane as a helical span at residues 317-340 (IVTQISSYVAYSNSCLNPLVYVIV). Topologically, residues 341–396 (GKRFRKKSREVYQAICRKGGCMGESVQMENSMGTLRTSISVDRQIHKLQDWAGNKQ) are cytoplasmic. A Phosphotyrosine modification is found at tyrosine 352. A lipid anchor (S-palmitoyl cysteine) is attached at cysteine 356. Serine 365 and serine 371 each carry phosphoserine. At threonine 374 the chain carries Phosphothreonine. Phosphoserine; by GRK6 occurs at positions 378 and 380.

The protein belongs to the G-protein coupled receptor 1 family. Bradykinin receptor subfamily. BDKRB2 sub-subfamily. Forms a complex with PECAM1 and GNAQ. Interacts with PECAM1. Diphosphorylation at Ser-365 and Ser-371, at Ser-378 and Ser-380, and at Thr-374 and Ser-380 seem to be correlated pairwise. In terms of processing, palmitoylation at Cys-356 and phosphorylation at Tyr-352 seem to be mutually exclusive. Uterus, vas deferens, kidney, ileum, heart, testis, lung and brain.

It localises to the cell membrane. Receptor for bradykinin. It is associated with G proteins that activate a phosphatidylinositol-calcium second messenger system. In Rattus norvegicus (Rat), this protein is B2 bradykinin receptor (Bdkrb2).